A 246-amino-acid chain; its full sequence is MKRELELLLKETSVHNPLKDYESKLDNVHLHTFVLRIKRHRFPSLFLMIDTSDRRLLNLSVEDPFDREPCIYRVEADVPESMVSFYTKLFEKVDSVSAGIFRMPLKVKVLRSAGNESWLQKIFLQEKVKNMEFFLFQNRVSDENLEKMMKLLKSRLKIVLRNEGIDVFLETPEWVDKEHISLLHEMGVVLRKKKGIQPAQNPMEQAFLTLRVGYDQFFEEDFDMEYFAKDFMEKLKRMYEVLVSML.

This is an uncharacterized protein from Thermotoga maritima (strain ATCC 43589 / DSM 3109 / JCM 10099 / NBRC 100826 / MSB8).